A 408-amino-acid polypeptide reads, in one-letter code: 1-deoxy-D-xylulose 5-phosphate reductoisomerase (408 aa).

Residues T27, G28, S29, I30, A53, R54, N55, and N140 each contribute to the NADPH site. Residue K141 participates in 1-deoxy-D-xylulose 5-phosphate binding. E142 lines the NADPH pocket. D166 is a binding site for Mn(2+). 1-deoxy-D-xylulose 5-phosphate contacts are provided by S167, E168, S192, and H215. Residue E168 participates in Mn(2+) binding. G221 contributes to the NADPH binding site. Residues S228, N233, K234, and E237 each coordinate 1-deoxy-D-xylulose 5-phosphate. E237 is a binding site for Mn(2+).

The protein belongs to the DXR family. Mg(2+) is required as a cofactor. It depends on Mn(2+) as a cofactor.

It carries out the reaction 2-C-methyl-D-erythritol 4-phosphate + NADP(+) = 1-deoxy-D-xylulose 5-phosphate + NADPH + H(+). Its pathway is isoprenoid biosynthesis; isopentenyl diphosphate biosynthesis via DXP pathway; isopentenyl diphosphate from 1-deoxy-D-xylulose 5-phosphate: step 1/6. Functionally, catalyzes the NADPH-dependent rearrangement and reduction of 1-deoxy-D-xylulose-5-phosphate (DXP) to 2-C-methyl-D-erythritol 4-phosphate (MEP). This chain is 1-deoxy-D-xylulose 5-phosphate reductoisomerase, found in Nitratidesulfovibrio vulgaris (strain ATCC 29579 / DSM 644 / CCUG 34227 / NCIMB 8303 / VKM B-1760 / Hildenborough) (Desulfovibrio vulgaris).